The primary structure comprises 142 residues: Transcriptional regulator MraZ (142 aa).

SpoVT-AbrB domains follow at residues 5–51 (ASAL…PRPE) and 77–120 (AMDV…DAQT).

This sequence belongs to the MraZ family. As to quaternary structure, forms oligomers.

It is found in the cytoplasm. It localises to the nucleoid. This chain is Transcriptional regulator MraZ, found in Paraburkholderia xenovorans (strain LB400).